The sequence spans 622 residues: 1,4-alpha-glucan branching enzyme GlgB (622 aa).

The Nucleophile role is filled by aspartate 306. The active-site Proton donor is glutamate 358. The segment at tyrosine 581–leucine 606 is disordered.

This sequence belongs to the glycosyl hydrolase 13 family. GlgB subfamily. In terms of assembly, monomer.

The enzyme catalyses Transfers a segment of a (1-&gt;4)-alpha-D-glucan chain to a primary hydroxy group in a similar glucan chain.. It participates in glycan biosynthesis; glycogen biosynthesis. Catalyzes the formation of the alpha-1,6-glucosidic linkages in glycogen by scission of a 1,4-alpha-linked oligosaccharide from growing alpha-1,4-glucan chains and the subsequent attachment of the oligosaccharide to the alpha-1,6 position. The chain is 1,4-alpha-glucan branching enzyme GlgB from Salinibacter ruber (strain DSM 13855 / M31).